A 237-amino-acid polypeptide reads, in one-letter code: Ribonuclease PH (237 aa).

Phosphate is bound by residues R86 and 124 to 126; that span reads GTR.

This sequence belongs to the RNase PH family. As to quaternary structure, homohexameric ring arranged as a trimer of dimers.

It carries out the reaction tRNA(n+1) + phosphate = tRNA(n) + a ribonucleoside 5'-diphosphate. In terms of biological role, phosphorolytic 3'-5' exoribonuclease that plays an important role in tRNA 3'-end maturation. Removes nucleotide residues following the 3'-CCA terminus of tRNAs; can also add nucleotides to the ends of RNA molecules by using nucleoside diphosphates as substrates, but this may not be physiologically important. Probably plays a role in initiation of 16S rRNA degradation (leading to ribosome degradation) during starvation. This is Ribonuclease PH from Erythrobacter litoralis (strain HTCC2594).